A 304-amino-acid chain; its full sequence is Oxygen-dependent coproporphyrinogen-III oxidase (304 aa).

Residue Ser-93 coordinates substrate. 2 residues coordinate a divalent metal cation: His-97 and His-107. Residue His-107 is the Proton donor of the active site. A substrate-binding site is contributed by 109 to 111; it reads NVR. His-146 and His-176 together coordinate a divalent metal cation. The segment at 241-276 is important for dimerization; it reads YVEFNLVYDRGTLFGLQSGGRTESILMSLPPQVRWG. Residue 259-261 participates in substrate binding; that stretch reads GGR.

The protein belongs to the aerobic coproporphyrinogen-III oxidase family. In terms of assembly, homodimer. Requires a divalent metal cation as cofactor.

The protein localises to the cytoplasm. It carries out the reaction coproporphyrinogen III + O2 + 2 H(+) = protoporphyrinogen IX + 2 CO2 + 2 H2O. The protein operates within porphyrin-containing compound metabolism; protoporphyrin-IX biosynthesis; protoporphyrinogen-IX from coproporphyrinogen-III (O2 route): step 1/1. In terms of biological role, involved in the heme biosynthesis. Catalyzes the aerobic oxidative decarboxylation of propionate groups of rings A and B of coproporphyrinogen-III to yield the vinyl groups in protoporphyrinogen-IX. This Pseudomonas syringae pv. syringae (strain B728a) protein is Oxygen-dependent coproporphyrinogen-III oxidase.